The sequence spans 279 residues: Energy-coupling factor transporter ATP-binding protein EcfA2 (279 aa).

The ABC transporter domain occupies I3 to G245. ATP is bound at residue G40–S47.

Belongs to the ABC transporter superfamily. Energy-coupling factor EcfA family. Forms a stable energy-coupling factor (ECF) transporter complex composed of 2 membrane-embedded substrate-binding proteins (S component), 2 ATP-binding proteins (A component) and 2 transmembrane proteins (T component).

The protein localises to the cell membrane. Its function is as follows. ATP-binding (A) component of a common energy-coupling factor (ECF) ABC-transporter complex. Unlike classic ABC transporters this ECF transporter provides the energy necessary to transport a number of different substrates. In Streptococcus pneumoniae serotype 2 (strain D39 / NCTC 7466), this protein is Energy-coupling factor transporter ATP-binding protein EcfA2.